Consider the following 143-residue polypeptide: Putative aryl-alcohol dehydrogenase AAD15 (143 aa).

This sequence belongs to the aldo/keto reductase family. Aldo/keto reductase 2 subfamily.

In terms of biological role, putative aryl-alcohol dehydrogenase. The polypeptide is Putative aryl-alcohol dehydrogenase AAD15 (AAD15) (Saccharomyces cerevisiae (strain ATCC 204508 / S288c) (Baker's yeast)).